A 367-amino-acid chain; its full sequence is tRNA/tmRNA (uracil-C(5))-methyltransferase (367 aa).

S-adenosyl-L-methionine is bound by residues Gln190, Tyr218, Asn223, Glu239, and Asp299. Cys324 serves as the catalytic Nucleophile. Residue Glu358 is the Proton acceptor of the active site.

The protein belongs to the class I-like SAM-binding methyltransferase superfamily. RNA M5U methyltransferase family. TrmA subfamily.

The enzyme catalyses uridine(54) in tRNA + S-adenosyl-L-methionine = 5-methyluridine(54) in tRNA + S-adenosyl-L-homocysteine + H(+). The catalysed reaction is uridine(341) in tmRNA + S-adenosyl-L-methionine = 5-methyluridine(341) in tmRNA + S-adenosyl-L-homocysteine + H(+). In terms of biological role, dual-specificity methyltransferase that catalyzes the formation of 5-methyluridine at position 54 (m5U54) in all tRNAs, and that of position 341 (m5U341) in tmRNA (transfer-mRNA). The polypeptide is tRNA/tmRNA (uracil-C(5))-methyltransferase (Musicola paradisiaca (strain Ech703) (Dickeya paradisiaca)).